A 353-amino-acid polypeptide reads, in one-letter code: MIKVLIADDSALMRKMLKQILESDPEIQVVGAARDGEDVVIKAREYRPDVVTMDVNMPKQDGITALQYIVNEEICPVLMVSSLTQEGAMTTFEALELGAFDFVGKPGGTVSSSSDMKKVAAEIINKIRAAAQLKNRVVKRERLARGQRQPVVKKKAPPRPGREVTKAVAMGISTGGPKMIYEVVPLIPPDINAALFLVQHMPPNFTPAYVKRLNEACQIEVIEARAGIKVEPGVLYVGSGGRHLNLVKNTAGDVIIRLSSKPDHLFIPSVSVMMESVLKVFSNRTIGVLMTGMGNDGADSMVNIRQAGGITIAESEESAIVFGMPGDAIKRGGAEIVVPIWNIAREIIRAVNR.

A Response regulatory domain is found at 3-120 (KVLIADDSAL…SSSSDMKKVA (118 aa)). Asp54 carries the 4-aspartylphosphate modification. The region spanning 158 to 353 (PRPGREVTKA…AREIIRAVNR (196 aa)) is the CheB-type methylesterase domain. Active-site residues include Ser173, His200, and Asp296.

The protein belongs to the CheB family. Post-translationally, phosphorylated by CheA. Phosphorylation of the N-terminal regulatory domain activates the methylesterase activity.

It localises to the cytoplasm. It catalyses the reaction [protein]-L-glutamate 5-O-methyl ester + H2O = L-glutamyl-[protein] + methanol + H(+). The enzyme catalyses L-glutaminyl-[protein] + H2O = L-glutamyl-[protein] + NH4(+). Involved in chemotaxis. Part of a chemotaxis signal transduction system that modulates chemotaxis in response to various stimuli. Catalyzes the demethylation of specific methylglutamate residues introduced into the chemoreceptors (methyl-accepting chemotaxis proteins or MCP) by CheR. Also mediates the irreversible deamidation of specific glutamine residues to glutamic acid. This Syntrophomonas wolfei subsp. wolfei (strain DSM 2245B / Goettingen) protein is Protein-glutamate methylesterase/protein-glutamine glutaminase 3.